A 186-amino-acid polypeptide reads, in one-letter code: Lipid A palmitoyltransferase PagP (186 aa).

Positions 1 to 25 are cleaved as a signal peptide; the sequence is MNVSKYVAIFSFVFIQLISVGKVFA. Catalysis depends on residues His58, Asp101, and Ser102.

It belongs to the lipid A palmitoyltransferase family. Homodimer.

It localises to the cell outer membrane. The catalysed reaction is lipid A (E. coli) + a 1-hexadecanoyl-2-acyl-sn-glycero-3-phosphocholine = hepta-acyl lipid A (E. coli) + a 2-acyl-sn-glycero-3-phosphocholine. The enzyme catalyses lipid IIA + a 1-hexadecanoyl-2-acyl-sn-glycero-3-phosphocholine = lipid IIB + a 2-acyl-sn-glycero-3-phosphocholine. It catalyses the reaction lipid IVA (E. coli) + a 1-hexadecanoyl-2-acyl-sn-glycero-3-phosphocholine = lipid IVB (E. coli) + a 2-acyl-sn-glycero-3-phosphocholine. Transfers a palmitate residue from the sn-1 position of a phospholipid to the N-linked hydroxymyristate on the proximal unit of lipid A or its precursors. This is Lipid A palmitoyltransferase PagP from Escherichia coli (strain ATCC 55124 / KO11FL).